The primary structure comprises 340 residues: Deubiquitinase SseL (340 aa).

His222 is an active-site residue. Cys284 (nucleophile) is an active-site residue.

The protein belongs to the peptidase C79 family.

It localises to the secreted. The protein localises to the host cytoplasm. Effector proteins function to alter host cell physiology and promote bacterial survival in host tissues. This protease targets the host cell ubiquitin pathway by acting as a deubiquitinase in infected host cells. The protein is Deubiquitinase SseL (sseL) of Salmonella arizonae (strain ATCC BAA-731 / CDC346-86 / RSK2980).